Reading from the N-terminus, the 124-residue chain is Large ribosomal subunit protein bL21 (124 aa).

A disordered region spans residues 105–124; that stretch reads TVKAEPKSKRAPAPEAAADA. The segment covering 115 to 124 has biased composition (low complexity); the sequence is APAPEAAADA.

This sequence belongs to the bacterial ribosomal protein bL21 family. As to quaternary structure, part of the 50S ribosomal subunit. Contacts protein L20.

Its function is as follows. This protein binds to 23S rRNA in the presence of protein L20. This Xanthobacter autotrophicus (strain ATCC BAA-1158 / Py2) protein is Large ribosomal subunit protein bL21.